A 1080-amino-acid polypeptide reads, in one-letter code: Protein transport protein SEC24 C (1080 aa).

Over residues 1–10 (MVAPVPPGAP) the composition is skewed to pro residues. 3 disordered regions span residues 1-189 (MVAP…SGMI), 201-220 (GSGGFPRGTQFPGAAVTTPQ), and 316-367 (TAMG…SDYV). Residues 12-43 (PNSQQNSGPPNFYPGSQGNSNALADNMQNLSL) show a composition bias toward polar residues. Positions 45 to 70 (RPPPMMPGSGPRPPPPFGQSPQPFPQ) are enriched in pro residues. Low complexity-rich tracts occupy residues 71-84 (QSPSYGAPQRGPSP), 142-160 (PAASSSGFPAFGPSGSVAA), and 178-189 (GSGMSMPPSGMI). Residues 340-356 (GSSSSPTVFETRQSNQA) are compositionally biased toward polar residues. The Zn(2+) site is built by cysteine 430, cysteine 433, cysteine 452, and cysteine 455. The zinc finger-like stretch occupies residues 430–455 (CSRCKGYINPFMKFIDQGRKFICNFC).

This sequence belongs to the SEC23/SEC24 family. SEC24 subfamily. Component of the coat protein complex II (COPII), composed of at least five proteins: the Sec23/24 complex, the Sec13/31 complex and Sar1. As to expression, mainly expressed at low levels in pollen, leaves, roots and stems.

It is found in the cytoplasmic vesicle. The protein resides in the COPII-coated vesicle membrane. The protein localises to the endoplasmic reticulum membrane. It localises to the golgi apparatus membrane. In terms of biological role, component of the coat protein complex II (COPII), that covers ER-derived vesicles involved in transport from the endoplasmic reticulum to the Golgi apparatus. COPII is composed of at least five proteins: the SEC23/24 complex, the SEC13/31 complex, and the protein SAR1. Acts in the cytoplasm to promote the transport of secretory, plasma membrane, and vacuolar proteins from the endoplasmic reticulum to the Golgi complex. The protein is Protein transport protein SEC24 C of Arabidopsis thaliana (Mouse-ear cress).